Consider the following 338-residue polypeptide: Protein FosB (338 aa).

2 disordered regions span residues 1-54 (MFQA…PGSF) and 80-179 (AQSQ…RREL). Polar residues predominate over residues 13–31 (SRCSSSPSAESQYLSSVDS). Residue Ser-27 is modified to Phosphoserine. A compositionally biased stretch (low complexity) spans 123–137 (PSTSTSTSGPVSARP). The region spanning 155–218 (EEKRRVRRER…ERLEFVLVAH (64 aa)) is the bZIP domain. A basic motif region spans residues 157–182 (KRRVRRERNKLAAAKCRNRRRELTDR). The leucine-zipper stretch occupies residues 183–211 (LQAETDQLEEEKAELESEIAELQKEKERL). Disordered regions lie at residues 222 to 276 (CKIP…PPNL) and 315 to 338 (AGSQ…LLAL). Positions 256 to 265 (LPPPPPPPLP) are enriched in pro residues. A compositionally biased stretch (polar residues) spans 266–276 (FQSSRDAPPNL).

It belongs to the bZIP family. Fos subfamily. As to quaternary structure, heterodimer; binds to DNA as heterodimer. Component of an AP-1 transcription factor complex; composed of FOS-JUN heterodimers. As part of the AP-1 transcription factor complex, forms heterodimers with JUN, JUNB or JUND, thereby binding to the AP-1 consensus sequence and stimulating transcription. Post-translationally, phosphorylated; phosphorylation is induced by chronic electroconvulsive seizure (ECS) treatment. In terms of tissue distribution, expressed in brain. Expressed in pyramidal cells in CA1 and CA3, in the dentate gyrus and the nucleus accumbens (at protein level).

Its subcellular location is the nucleus. Its function is as follows. Heterodimerizes with proteins of the JUN family to form an AP-1 transcription factor complex, thereby enhancing their DNA binding activity to an AP-1 consensus sequence 5'-TGA[GC]TCA-3' and enhancing their transcriptional activity. Exhibits transactivation activity in vitro. As part of the AP-1 complex, facilitates enhancer selection together with cell-type-specific transcription factors by collaboratively binding to nucleosomal enhancers and recruiting the SWI/SNF (BAF) chromatin remodeling complex to establish accessible chromatin. Together with JUN, plays a role in activation-induced cell death of T cells by binding to the AP-1 promoter site of FASLG/CD95L, and inducing its transcription in response to activation of the TCR/CD3 signaling pathway. Involved in the display of nurturing behavior towards newborns. May play a role in neurogenesis in the hippocampus and in learning and memory-related tasks by regulating the expression of various genes involved in neurogenesis, depression and epilepsy. Implicated in behavioral responses related to morphine reward and spatial memory. In Rattus norvegicus (Rat), this protein is Protein FosB.